Consider the following 218-residue polypeptide: Small ribosomal subunit protein uS3 (218 aa).

Positions 38-106 constitute a KH type-2 domain; sequence IREYINKRLQ…REHINIVEIK (69 aa).

The protein belongs to the universal ribosomal protein uS3 family. In terms of assembly, part of the 30S ribosomal subunit. Forms a tight complex with proteins S10 and S14.

Binds the lower part of the 30S subunit head. Binds mRNA in the 70S ribosome, positioning it for translation. This is Small ribosomal subunit protein uS3 from Geobacillus stearothermophilus (Bacillus stearothermophilus).